The following is a 111-amino-acid chain: Cytochrome b-c1 complex subunit 7 (111 aa).

Ala-2 is subject to N-acetylalanine. Lys-12 is subject to N6-acetyllysine; alternate. The residue at position 12 (Lys-12) is an N6-succinyllysine; alternate. An N6-acetyllysine modification is found at Lys-19. Position 78 is an N6-acetyllysine; alternate (Lys-78). The residue at position 78 (Lys-78) is an N6-succinyllysine; alternate. N6-acetyllysine occurs at positions 83 and 96.

It belongs to the UQCRB/QCR7 family. In terms of assembly, component of the ubiquinol-cytochrome c oxidoreductase (cytochrome b-c1 complex, complex III, CIII), a multisubunit enzyme composed of 11 subunits. The complex is composed of 3 respiratory subunits cytochrome b, cytochrome c1 and Rieske protein UQCRFS1, 2 core protein subunits UQCRC1/QCR1 and UQCRC2/QCR2, and 6 low-molecular weight protein subunits UQCRH/QCR6, UQCRB/QCR7, UQCRQ/QCR8, UQCR10/QCR9, UQCR11/QCR10 and subunit 9, the cleavage product of Rieske protein UQCRFS1. The complex exists as an obligatory dimer and forms supercomplexes (SCs) in the inner mitochondrial membrane with NADH-ubiquinone oxidoreductase (complex I, CI) and cytochrome c oxidase (complex IV, CIV), resulting in different assemblies (supercomplex SCI(1)III(2)IV(1) and megacomplex MCI(2)III(2)IV(2)).

The protein resides in the mitochondrion inner membrane. In terms of biological role, component of the ubiquinol-cytochrome c oxidoreductase, a multisubunit transmembrane complex that is part of the mitochondrial electron transport chain which drives oxidative phosphorylation. The respiratory chain contains 3 multisubunit complexes succinate dehydrogenase (complex II, CII), ubiquinol-cytochrome c oxidoreductase (cytochrome b-c1 complex, complex III, CIII) and cytochrome c oxidase (complex IV, CIV), that cooperate to transfer electrons derived from NADH and succinate to molecular oxygen, creating an electrochemical gradient over the inner membrane that drives transmembrane transport and the ATP synthase. The cytochrome b-c1 complex catalyzes electron transfer from ubiquinol to cytochrome c, linking this redox reaction to translocation of protons across the mitochondrial inner membrane, with protons being carried across the membrane as hydrogens on the quinol. In the process called Q cycle, 2 protons are consumed from the matrix, 4 protons are released into the intermembrane space and 2 electrons are passed to cytochrome c. This Homo sapiens (Human) protein is Cytochrome b-c1 complex subunit 7 (UQCRB).